The following is a 132-amino-acid chain: uncharacterized protein (132 aa).

The signal sequence occupies residues 1–24 (MVTIGSSSLVLFLFFVVFVQITYT). Transmembrane regions (helical) follow at residues 75–95 (YVNV…ILGI) and 112–132 (ESAI…VYIH).

Its subcellular location is the membrane. This is an uncharacterized protein from Saccharomyces cerevisiae (strain ATCC 204508 / S288c) (Baker's yeast).